A 1335-amino-acid chain; its full sequence is Protein SPATA31F1 (1335 aa).

A helical membrane pass occupies residues 8-28; sequence LWEVGYPLYIYGSIFIVIVII. 5 disordered regions span residues 403–424, 480–502, 972–1002, 1019–1141, and 1248–1335; these read ALKA…SGSD, LPKT…MSPS, VQQN…SGDM, PSLE…LQDS, and ENVA…GHPT. Residues 414–424 show a composition bias toward polar residues; it reads SGGQDNDSGSD. A compositionally biased stretch (polar residues) spans 972-1000; the sequence is VQQNQKQSNSKAVPQGSAHSVSKISQPSG. Composition is skewed to basic and acidic residues over residues 1047–1064, 1071–1083, and 1129–1139; these read NRED…REGD, STRE…EDQR, and PGEKESEKDLQ.

It belongs to the SPATA31 family.

The protein localises to the membrane. The polypeptide is Protein SPATA31F1 (Homo sapiens (Human)).